A 475-amino-acid chain; its full sequence is ATP synthase subunit beta (475 aa).

Position 161–168 (161–168 (GGAGVGKT)) interacts with ATP.

The protein belongs to the ATPase alpha/beta chains family. In terms of assembly, F-type ATPases have 2 components, CF(1) - the catalytic core - and CF(0) - the membrane proton channel. CF(1) has five subunits: alpha(3), beta(3), gamma(1), delta(1), epsilon(1). CF(0) has three main subunits: a(1), b(2) and c(9-12). The alpha and beta chains form an alternating ring which encloses part of the gamma chain. CF(1) is attached to CF(0) by a central stalk formed by the gamma and epsilon chains, while a peripheral stalk is formed by the delta and b chains.

It localises to the cell membrane. It catalyses the reaction ATP + H2O + 4 H(+)(in) = ADP + phosphate + 5 H(+)(out). Its function is as follows. Produces ATP from ADP in the presence of a proton gradient across the membrane. The catalytic sites are hosted primarily by the beta subunits. This is ATP synthase subunit beta from Mycoplasma mycoides subsp. mycoides SC (strain CCUG 32753 / NCTC 10114 / PG1).